A 227-amino-acid polypeptide reads, in one-letter code: Ion-translocating oxidoreductase complex subunit E (227 aa).

5 helical membrane-spanning segments follow: residues 34–56 (AINA…TIIS), 68–88 (IPIY…LLHA), 91–111 (FNLY…CIIV), 127–147 (FFDG…VGSI), and 181–201 (TIIL…LIAI).

Belongs to the NqrDE/RnfAE family. As to quaternary structure, the complex is composed of six subunits: RnfA, RnfB, RnfC, RnfD, RnfE and RnfG.

It localises to the cell inner membrane. Its function is as follows. Part of a membrane-bound complex that couples electron transfer with translocation of ions across the membrane. The chain is Ion-translocating oxidoreductase complex subunit E from Buchnera aphidicola subsp. Acyrthosiphon pisum (strain APS) (Acyrthosiphon pisum symbiotic bacterium).